The chain runs to 330 residues: MKTAYIAKQRQISFVKSHFSRQLEERLGLIEVQAPILSRVGDGTQDNLSGCEKAVQVKVKALPDAQFEVVHSLAKWKRQTLGQHDFSAGEGLYTHMKALRPDEDRLSSLHSVYVDQWDWERVMGDGERQFSTLKSTVEAIWEGIKATEAAVSEEFGLAPFLPDQIHFVHSQELLSRYPELDAKGRERAIAKDLGAVFLVGIGGKLSDGHRHDVRAPDYDDWSTPSELGHAGLNGDILVWNPVLEDAFELSSMGIRVDADTLKHQLALTGDEDRLELEWHQALLRGEMPQTIGGGIGQSRLTMLLLQLPHIGQVQCGVWPAAVRESVPSLL.

This sequence belongs to the class-II aminoacyl-tRNA synthetase family. AsnA subfamily.

It is found in the cytoplasm. The catalysed reaction is L-aspartate + NH4(+) + ATP = L-asparagine + AMP + diphosphate + H(+). It functions in the pathway amino-acid biosynthesis; L-asparagine biosynthesis; L-asparagine from L-aspartate (ammonia route): step 1/1. The polypeptide is Aspartate--ammonia ligase (Escherichia coli O7:K1 (strain IAI39 / ExPEC)).